We begin with the raw amino-acid sequence, 230 residues long: Ribonuclease 3 (230 aa).

The RNase III domain occupies 10–133 (DPRLLSRIGY…IIGAIYLDSS (124 aa)). Glu-46 lines the Mg(2+) pocket. Asp-50 is an active-site residue. Positions 119 and 122 each coordinate Mg(2+). Residue Glu-122 is part of the active site. A DRBM domain is found at 161–230 (DPKSRLQEYL…AAEILKLLEQ (70 aa)).

The protein belongs to the ribonuclease III family. As to quaternary structure, homodimer. It depends on Mg(2+) as a cofactor.

Its subcellular location is the cytoplasm. It carries out the reaction Endonucleolytic cleavage to 5'-phosphomonoester.. Its function is as follows. Digests double-stranded RNA. Involved in the processing of primary rRNA transcript to yield the immediate precursors to the large and small rRNAs (23S and 16S). Processes some mRNAs, and tRNAs when they are encoded in the rRNA operon. Processes pre-crRNA and tracrRNA of type II CRISPR loci if present in the organism. This Acinetobacter baumannii (strain AB307-0294) protein is Ribonuclease 3 (rnc).